We begin with the raw amino-acid sequence, 350 residues long: Probable poly-beta-1,6-N-acetyl-D-glucosamine export protein (350 aa).

A run of 10 helical transmembrane segments spans residues 7–29, 44–66, 79–101, 116–138, 145–167, 187–204, 211–233, 243–262, 269–291, and 306–328; these read ELVYLRAIICAIIIVTHLLTQIT, FYIRNIVIFGTPCFIILSQLLTT, TRVKYILIPYILMGLFYSYSESL, LLGQWYGYFIVVIMQFFILSYII, LFNSKILLLLSFILQQSFLYYFT, IIFGWIFYFFLGAYMGYN, FLERYLVIMIVLAVATYFVFIAL, SFSYSLTPYNSIMFIVILGI, MLFNTIQMISAFSFFIYLLHPII, and TMVFLAISLLFILGLCIGVGMIL.

This sequence belongs to the acyltransferase 3 family.

The protein localises to the cell membrane. Its function is as follows. Presumably involved in the export of the biofilm adhesin polysaccharide poly-beta-1,6-N-acetyl-D-glucosamine (PNAG, also referred to as PIA) across the cell membrane. This chain is Probable poly-beta-1,6-N-acetyl-D-glucosamine export protein (icaC), found in Staphylococcus aureus (strain MRSA252).